Reading from the N-terminus, the 327-residue chain is Zinc transport protein ZntB (327 aa).

Residues 1–273 (MEAIKGSDVN…ARRTYTMSLM (273 aa)) lie on the Cytoplasmic side of the membrane. Residues 274–294 (AMVFLPSTFLTGLFGVNLGGI) form a helical membrane-spanning segment. The Periplasmic portion of the chain corresponds to 295–300 (PGGGWQ). Residues 301–321 (FGFSIFCILLVVLIGGVALWL) form a helical membrane-spanning segment. At 322 to 327 (HRSKWL) the chain is on the cytoplasmic side.

Belongs to the CorA metal ion transporter (MIT) (TC 1.A.35) family.

The protein resides in the cell inner membrane. It catalyses the reaction Zn(2+)(out) + H(+)(out) = Zn(2+)(in) + H(+)(in). Its function is as follows. Zinc transporter. Acts as a Zn(2+):proton symporter, which likely mediates zinc ion uptake. The polypeptide is Zinc transport protein ZntB (Escherichia coli O6:K15:H31 (strain 536 / UPEC)).